The primary structure comprises 339 residues: Phenylalanine--tRNA ligase alpha subunit (339 aa).

Residue Glu254 participates in Mg(2+) binding.

This sequence belongs to the class-II aminoacyl-tRNA synthetase family. Phe-tRNA synthetase alpha subunit type 1 subfamily. Tetramer of two alpha and two beta subunits. It depends on Mg(2+) as a cofactor.

The protein resides in the cytoplasm. It carries out the reaction tRNA(Phe) + L-phenylalanine + ATP = L-phenylalanyl-tRNA(Phe) + AMP + diphosphate + H(+). The chain is Phenylalanine--tRNA ligase alpha subunit from Desulforudis audaxviator (strain MP104C).